Consider the following 481-residue polypeptide: FAD-linked oxidoreductase afoF (481 aa).

An N-terminal signal peptide occupies residues 1–16 (MRFLLQSITLVAAARA). An FAD-binding PCMH-type domain is found at 52 to 227 (SEWRPPTWTG…TAATFKMFDQ (176 aa)). Asn82 carries an N-linked (GlcNAc...) asparagine glycan. At His92 the chain carries Pros-8alpha-FAD histidine. Residues Asn196, Asn241, Asn276, Asn309, Asn312, and Asn376 are each glycosylated (N-linked (GlcNAc...) asparagine).

The protein belongs to the oxygen-dependent FAD-linked oxidoreductase family. Requires FAD as cofactor.

FAD-linked oxidoreductase; part of the gene cluster that mediates the biosynthesis of asperfuranone, a probable antitumor agent. The polyketide synthase afoG is responsible for producing the 3,5-dimethyloctadienone moiety from acetyl-CoA, three malonyl-CoA, and two S-adenosyl methionines (SAM). The 3,5-dimethyloctadienone moiety is then loaded onto the SAT domain of afoE and extended with four malonyl-CoA and one SAM, which leads to the formation of 2,4-dihydroxy-6-(5,7-dimethyl-2-oxo-trans-3-trans-5-nonadienyl)-3-methylbenzaldehyde (compound 2) after reductive release and aldol condensation. AfoD is the next enzyme in the biosynthesis sequence and hydroxylates the side chain at the benzylic position of compound 2. After benzylic hydroxylation, a furan ring is formed after five-member ring hemiacetal formation and water elimination. AfoF and afoC are proposed to oxidize the R-diketone proton and to reduce the unconjugated carbonyl group, respectively, to generate asperfuranone. Since no intermediates could be isolated from afoF and afoC deletants, the sequence of these two enzymes is not fully understood. Moreover, since afoC deletant still produces a small amount of asperfuranone, other endogenous oxidoreductases might catalyze the same reaction with much less efficiency. The polypeptide is FAD-linked oxidoreductase afoF (Emericella nidulans (strain FGSC A4 / ATCC 38163 / CBS 112.46 / NRRL 194 / M139) (Aspergillus nidulans)).